A 1480-amino-acid chain; its full sequence is Cystic fibrosis transmembrane conductance regulator (1480 aa).

Residues 1–77 are Cytoplasmic-facing; the sequence is MQRSPLEKAS…KLINALRRCF (77 aa). Residues 78 to 98 traverse the membrane as a helical segment; sequence FWRFMFYGIFLYLGEVTKAVQ. Positions 81–365 constitute an ABC transmembrane type-1 1 domain; it reads FMFYGIFLYL…WAVQTWYDSL (285 aa). Topologically, residues 99 to 122 are extracellular; the sequence is PLLLGRIIASYDPDNKEERSIAIY. Residues 123 to 146 traverse the membrane as a helical segment; sequence LGIGLCLLFIVRTLLLHPAIFGLH. Over 147 to 195 the chain is Cytoplasmic; that stretch reads HIGMQMRIAMFSLIYKKTLKLSSRVLDKISIGQLVSLLSNNLNKFDEGL. Residues 196 to 216 form a helical membrane-spanning segment; sequence ALAHFVWIAPLQVALLMGLIW. Residues 217 to 222 are Extracellular-facing; the sequence is ELLQAS. The chain crosses the membrane as a helical span at residues 223-243; sequence AFCGLGFLIVLALFQAGLGRM. Over 244 to 298 the chain is Cytoplasmic; the sequence is MMKYRDQRAGKISERLVITSEMIENIQSVKAYCWEEAMEKMIENLRQTELKLTRK. The helical transmembrane segment at 299–319 threads the bilayer; it reads AAYVRYFNSSAFFFSGFFVVF. The Extracellular portion of the chain corresponds to 320 to 339; it reads LSVLPYALIKGIILRKIFTT. Residues 340 to 358 form a helical membrane-spanning segment; that stretch reads ISFCIVLRMAVTRQFPWAV. At 359 to 858 the chain is on the cytoplasmic side; the sequence is QTWYDSLGAI…YLRYITVHKS (500 aa). ATP-binding positions include Trp-401, Ser-434, 458 to 465, and Gln-493; that span reads GSTGAGKT. Positions 423–646 constitute an ABC transporter 1 domain; the sequence is NGDDSLFFSN…RPDFSSKLMG (224 aa). Cys-524 carries S-palmitoyl cysteine lipidation. Phosphoserine occurs at positions 549 and 660. The disordered R region stretch occupies residues 654 to 831; the sequence is SAERRNSILT…EEINEEDLKE (178 aa). Ser-670 is modified (phosphoserine; by PKA). Ser-686 carries the phosphoserine modification. Lys-688 participates in a covalent cross-link: Glycyl lysine isopeptide (Lys-Gly) (interchain with G-Cter in ubiquitin). Phosphoserine occurs at positions 700 and 712. Thr-717 is modified (phosphothreonine). A phosphoserine mark is found at Ser-737, Ser-753, Ser-768, Ser-790, Ser-795, and Ser-813. Residues 859–879 traverse the membrane as a helical segment; sequence LIFVLIWCLVIFLAEVAASLV. An ABC transmembrane type-1 2 domain is found at 859 to 1155; it reads LIFVLIWCLV…AVNSSIDVDS (297 aa). Residues 880-918 lie on the Extracellular side of the membrane; it reads VLWLLGNTPLQDKGNSTHSRNNSYAVIITSTSSYYVFYI. N-linked (GlcNAc...) asparagine glycosylation is found at Asn-894 and Asn-900. The discontinuously helical transmembrane segment at 919 to 939 threads the bilayer; it reads YVGVADTLLAMGFFRGLPLVH. At 940–990 the chain is on the cytoplasmic side; that stretch reads TLITVSKILHHKMLHSVLQAPMSTLNTLKAGGILNRFSKDIAILDDLLPLT. A helical transmembrane segment spans residues 991–1011; sequence IFDFIQLLLIVIGAIAVVAVL. The Extracellular portion of the chain corresponds to 1012–1013; that stretch reads QP. Residues 1014–1034 traverse the membrane as a helical segment; the sequence is YIFVATVPVIVAFIMLRAYFL. Residues 1035 to 1095 lie on the Cytoplasmic side of the membrane; the sequence is QTSQQLKQLE…TANWFLYLST (61 aa). Residues 1096-1116 form a helical membrane-spanning segment; that stretch reads LRWFQMRIEMIFVIFFIAVTF. Topologically, residues 1117 to 1130 are extracellular; that stretch reads ISILTTGEGEGRVG. The helical transmembrane segment at 1131-1151 threads the bilayer; it reads IILTLAMNIMSTLQWAVNSSI. At 1152–1480 the chain is on the cytoplasmic side; the sequence is DVDSLMRSVS…TEEEVQDTRL (329 aa). The region spanning 1210–1443 is the ABC transporter 2 domain; the sequence is MTVKDLTAKY…RSLFRQAISP (234 aa). Residues Tyr-1219 and 1244–1251 each bind ATP; that span reads GRTGSGKS. Residues 1386–1480 form an interaction with GORASP2 region; that stretch reads RTLKQAFADC…TEEEVQDTRL (95 aa). Cys-1395 carries the S-palmitoyl cysteine lipid modification. Ser-1444 and Ser-1456 each carry phosphoserine. Residues 1452–1480 are disordered; it reads HRNSSKCKSKPQIAALKEETEEEVQDTRL. The span at 1470–1480 shows a compositional bias: acidic residues; that stretch reads ETEEEVQDTRL. Residues 1478-1480 carry the PDZ-binding motif; sequence TRL.

The protein belongs to the ABC transporter superfamily. ABCC family. CFTR transporter (TC 3.A.1.202) subfamily. As to quaternary structure, monomer; does not require oligomerization for channel activity. May form oligomers in the membrane. Interacts with SLC26A3, SLC26A6 and NHERF1. Interacts with SHANK2. Interacts with MYO6. Interacts (via C-terminus) with GOPC (via PDZ domain); this promotes CFTR internalization and thereby decreases channel activity. Interacts with SLC4A7 through NHERF1. Found in a complex with MYO5B and RAB11A. Interacts with ANO1. Interacts with SLC26A8. Interacts with AHCYL1; the interaction increases CFTR activity. Interacts with CSE1L. The core-glycosylated form interacts with GORASP2 (via PDZ GRASP-type 1 domain) in respone to ER stress. Interacts with MARCHF2; the interaction leads to CFTR ubiqtuitination and degradation. Interacts with ADGRG2. Post-translationally, N-glycosylated. In terms of processing, phosphorylated; cAMP treatment promotes phosphorylation and activates the channel. Dephosphorylation decreases the ATPase activity (in vitro). Phosphorylation at PKA sites activates the channel. Phosphorylation at PKC sites enhances the response to phosphorylation by PKA. Phosphorylated by AMPK; this inhibits channel activity. Ubiquitinated, leading to its degradation in the lysosome. Deubiquitination by USP10 in early endosomes enhances its endocytic recycling to the cell membrane. Ubiquitinated by RNF185 during ER stress. Ubiquitinated by MARCHF2.

It is found in the apical cell membrane. It localises to the early endosome membrane. The protein localises to the cell membrane. Its subcellular location is the recycling endosome membrane. The protein resides in the endoplasmic reticulum membrane. It is found in the nucleus. It carries out the reaction ATP + H2O + closed Cl(-) channel = ADP + phosphate + open Cl(-) channel.. It catalyses the reaction chloride(in) = chloride(out). The catalysed reaction is hydrogencarbonate(in) = hydrogencarbonate(out). The enzyme catalyses ATP + H2O = ADP + phosphate + H(+). In terms of biological role, epithelial ion channel that plays an important role in the regulation of epithelial ion and water transport and fluid homeostasis. Mediates the transport of chloride ions across the cell membrane. Possesses an intrinsic ATPase activity and utilizes ATP to gate its channel; the passive flow of anions through the channel is gated by cycles of ATP binding and hydrolysis by the ATP-binding domains. The ion channel is also permeable to HCO(3)(-); selectivity depends on the extracellular chloride concentration. Exerts its function also by modulating the activity of other ion channels and transporters. Contributes to the regulation of the pH and the ion content of the epithelial fluid layer. Modulates the activity of the epithelial sodium channel (ENaC) complex, in part by regulating the cell surface expression of the ENaC complex. May regulate bicarbonate secretion and salvage in epithelial cells by regulating the transporter SLC4A7. Can inhibit the chloride channel activity of ANO1. Plays a role in the chloride and bicarbonate homeostasis during sperm epididymal maturation and capacitation. The chain is Cystic fibrosis transmembrane conductance regulator from Pan troglodytes (Chimpanzee).